The following is a 304-amino-acid chain: Protease HtpX homolog (304 aa).

2 consecutive transmembrane segments (helical) span residues 19 to 39 (FIVF…VSYF) and 41 to 61 (LGEI…YYAY). His146 serves as a coordination point for Zn(2+). Glu147 is an active-site residue. A Zn(2+)-binding site is contributed by His150. The next 2 membrane-spanning stretches (helical) occupy residues 156-176 (VRLQ…GDGL) and 192-212 (NILG…ATLL). Glu221 provides a ligand contact to Zn(2+).

The protein belongs to the peptidase M48B family. It depends on Zn(2+) as a cofactor.

Its subcellular location is the cell inner membrane. In Dictyoglomus turgidum (strain DSM 6724 / Z-1310), this protein is Protease HtpX homolog.